Here is a 115-residue protein sequence, read N- to C-terminus: uncharacterized protein (115 aa).

The segment at 1–86 (RRPARSGGDG…LSSQLVRPSR (86 aa)) is disordered.

This is an uncharacterized protein from Homo sapiens (Human).